Reading from the N-terminus, the 221-residue chain is Histone H1C (221 aa).

Composition is skewed to low complexity over residues 1–11 (MTETAATETTP) and 27–44 (KKAA…PSAS). 2 disordered regions span residues 1 to 44 (MTET…PSAS) and 123 to 221 (AKKK…AAKK). The H15 domain maps to 39 to 112 (SGPSASELIV…GASGSFKLNK (74 aa)). Composition is skewed to basic residues over residues 123–150 (AKKK…KPKK) and 158–221 (SPKK…AAKK).

The protein belongs to the histone H1/H5 family.

Its subcellular location is the nucleus. It localises to the chromosome. Histones H1 are necessary for the condensation of nucleosome chains into higher-order structures. The chain is Histone H1C from Xenopus laevis (African clawed frog).